Reading from the N-terminus, the 323-residue chain is Palmitoyltransferase ZDHHC20-B (323 aa).

Residues 1 to 14 lie on the Cytoplasmic side of the membrane; the sequence is MAPTHVLRCCQRGL. A helical transmembrane segment spans residues 15 to 35; sequence AWIPVIFIALVVCWSYYAYVV. The Lumenal segment spans residues 36–41; it reads ELCLLV. The helical transmembrane segment at 42–62 threads the bilayer; sequence YLVVFHLSFVMFVWSYWKTIF. Residues 63-157 are Cytoplasmic-facing; the sequence is TKPANPSKEF…NNCVGFSNYK (95 aa). The DHHC domain occupies 114-164; sequence RYCDRCQVIKPDRCHHCSACDMCVLKMDHHCPWVNNCVGFSNYKFFILFLT. Catalysis depends on cysteine 144, which acts as the S-palmitoyl cysteine intermediate. The helical transmembrane segment at 158 to 178 threads the bilayer; that stretch reads FFILFLTYSLVYCLFIAASVL. At 179–195 the chain is on the lumenal side; that stretch reads QYFIKFWTSDLPESHAK. A helical transmembrane segment spans residues 196 to 219; it reads FHVLFLFFVAAMFCISILSLFTYH. Over 220–323 the chain is Cytoplasmic; the sequence is LWLVGKNRST…KQAKKKKTDE (104 aa).

The protein belongs to the DHHC palmitoyltransferase family.

It is found in the golgi apparatus membrane. The protein localises to the cell membrane. It localises to the cytoplasm. Its subcellular location is the perinuclear region. The protein resides in the endoplasmic reticulum membrane. It is found in the endoplasmic reticulum-Golgi intermediate compartment membrane. The enzyme catalyses L-cysteinyl-[protein] + hexadecanoyl-CoA = S-hexadecanoyl-L-cysteinyl-[protein] + CoA. It catalyses the reaction L-cysteinyl-[protein] + tetradecanoyl-CoA = S-tetradecanoyl-L-cysteinyl-[protein] + CoA. The catalysed reaction is L-cysteinyl-[protein] + octadecanoyl-CoA = S-octadecanoyl-L-cysteinyl-[protein] + CoA. In terms of biological role, palmitoyltransferase that could catalyze the addition of palmitate onto various protein substrates. Catalyzes palmitoylation of Cys residues on protein substrates and has a preference for acyl-CoA with C16 fatty acid chains but may also utilize acyl-CoA with C14 and C18 fatty acid chains. This Danio rerio (Zebrafish) protein is Palmitoyltransferase ZDHHC20-B (zdhhc20b).